A 261-amino-acid polypeptide reads, in one-letter code: Glucosamine-6-phosphate deaminase (261 aa).

D67 (proton acceptor; for enolization step) is an active-site residue. N135 acts as the For ring-opening step in catalysis. H137 (proton acceptor; for ring-opening step) is an active-site residue. E142 acts as the For ring-opening step in catalysis.

It belongs to the glucosamine/galactosamine-6-phosphate isomerase family. NagB subfamily. In terms of assembly, homohexamer.

The catalysed reaction is alpha-D-glucosamine 6-phosphate + H2O = beta-D-fructose 6-phosphate + NH4(+). Its pathway is amino-sugar metabolism; N-acetylneuraminate degradation; D-fructose 6-phosphate from N-acetylneuraminate: step 5/5. Functionally, catalyzes the reversible isomerization-deamination of glucosamine 6-phosphate (GlcN6P) to form fructose 6-phosphate (Fru6P) and ammonium ion. In Hahella chejuensis (strain KCTC 2396), this protein is Glucosamine-6-phosphate deaminase.